Reading from the N-terminus, the 523-residue chain is Fidgetin-like protein 1 (523 aa).

A disordered region spans residues 114-154 (PVQQAVKSRPEGQFPESRNNSTKKIDAQQYSSESSSQSGFG). Residues 141–151 (QQYSSESSSQS) show a composition bias toward low complexity. ATP is bound by residues Ala-253 and 293 to 298 (GTGKTL).

It belongs to the AAA ATPase family. In terms of assembly, hexamer. Requires Mg(2+) as cofactor.

It catalyses the reaction ATP + H2O = ADP + phosphate + H(+). This is Fidgetin-like protein 1 from Drosophila melanogaster (Fruit fly).